We begin with the raw amino-acid sequence, 122 residues long: Large ribosomal subunit protein uL18 (122 aa).

The protein belongs to the universal ribosomal protein uL18 family. As to quaternary structure, part of the 50S ribosomal subunit; part of the 5S rRNA/L5/L18/L25 subcomplex. Contacts the 5S and 23S rRNAs.

Its function is as follows. This is one of the proteins that bind and probably mediate the attachment of the 5S RNA into the large ribosomal subunit, where it forms part of the central protuberance. This Desulforamulus reducens (strain ATCC BAA-1160 / DSM 100696 / MI-1) (Desulfotomaculum reducens) protein is Large ribosomal subunit protein uL18.